Here is a 218-residue protein sequence, read N- to C-terminus: MNRQKVIAIDGPGASGKGTVAARVAAALGYDYLDTGALYRLTALYAQKQGVEWHDEENVSALAKKLPAVFSGNRILLDGEDVSDGIRTEAIGMGASAVAQWPKVRAALLQRQRDFLTEKGLVADGRDTGSVVFPQAELKIFLTAESKIRAERRAKQIGIPCEGFTFERILSDIETRDEADRNRKVAPLKQQPDALLLDTSRLTIEETVKKVLDWYRKV.

G11–T19 is a binding site for ATP.

This sequence belongs to the cytidylate kinase family. Type 1 subfamily.

It is found in the cytoplasm. The enzyme catalyses CMP + ATP = CDP + ADP. It catalyses the reaction dCMP + ATP = dCDP + ADP. In Neisseria gonorrhoeae (strain ATCC 700825 / FA 1090), this protein is Cytidylate kinase.